A 344-amino-acid polypeptide reads, in one-letter code: tRNA N6-adenosine threonylcarbamoyltransferase (344 aa).

Fe cation-binding residues include histidine 111 and histidine 115. Residues 134 to 138 (LVSGG), aspartate 167, glycine 180, and asparagine 273 each bind substrate. Aspartate 301 serves as a coordination point for Fe cation.

It belongs to the KAE1 / TsaD family. Requires Fe(2+) as cofactor.

The protein localises to the cytoplasm. It carries out the reaction L-threonylcarbamoyladenylate + adenosine(37) in tRNA = N(6)-L-threonylcarbamoyladenosine(37) in tRNA + AMP + H(+). Its function is as follows. Required for the formation of a threonylcarbamoyl group on adenosine at position 37 (t(6)A37) in tRNAs that read codons beginning with adenine. Is involved in the transfer of the threonylcarbamoyl moiety of threonylcarbamoyl-AMP (TC-AMP) to the N6 group of A37, together with TsaE and TsaB. TsaD likely plays a direct catalytic role in this reaction. The chain is tRNA N6-adenosine threonylcarbamoyltransferase from Cupriavidus pinatubonensis (strain JMP 134 / LMG 1197) (Cupriavidus necator (strain JMP 134)).